Consider the following 254-residue polypeptide: Triosephosphate isomerase (254 aa).

Residue 12–14 (NWK) participates in substrate binding. The active-site Electrophile is the H99. The active-site Proton acceptor is the E169. Substrate is bound by residues G175, S214, and 235–236 (GG).

The protein belongs to the triosephosphate isomerase family. In terms of assembly, homodimer.

The protein resides in the cytoplasm. The enzyme catalyses D-glyceraldehyde 3-phosphate = dihydroxyacetone phosphate. The protein operates within carbohydrate biosynthesis; gluconeogenesis. It participates in carbohydrate degradation; glycolysis; D-glyceraldehyde 3-phosphate from glycerone phosphate: step 1/1. In terms of biological role, involved in the gluconeogenesis. Catalyzes stereospecifically the conversion of dihydroxyacetone phosphate (DHAP) to D-glyceraldehyde-3-phosphate (G3P). The protein is Triosephosphate isomerase of Bartonella tribocorum (strain CIP 105476 / IBS 506).